The primary structure comprises 287 residues: ATP synthase subunit a (287 aa).

6 consecutive transmembrane segments (helical) span residues 38-58 (DSMV…WTAA), 96-116 (FIAP…AMDM), 139-161 (VVPT…LRFW), 187-207 (PLFA…EYVA), 225-245 (LVFM…SGVL), and 259-279 (LFHI…ALIY).

The protein belongs to the ATPase A chain family. In terms of assembly, F-type ATPases have 2 components, CF(1) - the catalytic core - and CF(0) - the membrane proton channel. CF(1) has five subunits: alpha(3), beta(3), gamma(1), delta(1), epsilon(1). CF(0) has three main subunits: a(1), b(2) and c(9-12). The alpha and beta chains form an alternating ring which encloses part of the gamma chain. CF(1) is attached to CF(0) by a central stalk formed by the gamma and epsilon chains, while a peripheral stalk is formed by the delta and b chains.

The protein resides in the cell inner membrane. Key component of the proton channel; it plays a direct role in the translocation of protons across the membrane. This is ATP synthase subunit a from Verminephrobacter eiseniae (strain EF01-2).